Here is a 785-residue protein sequence, read N- to C-terminus: Endonuclease MutS2 (785 aa).

334 to 341 (GPNTGGKT) contacts ATP. One can recognise a Smr domain in the interval 710–785 (LDLRGKRYEE…GNGATIVHFK (76 aa)).

The protein belongs to the DNA mismatch repair MutS family. MutS2 subfamily. As to quaternary structure, homodimer. Binds to stalled ribosomes, contacting rRNA.

In terms of biological role, endonuclease that is involved in the suppression of homologous recombination and thus may have a key role in the control of bacterial genetic diversity. Acts as a ribosome collision sensor, splitting the ribosome into its 2 subunits. Detects stalled/collided 70S ribosomes which it binds and splits by an ATP-hydrolysis driven conformational change. Acts upstream of the ribosome quality control system (RQC), a ribosome-associated complex that mediates the extraction of incompletely synthesized nascent chains from stalled ribosomes and their subsequent degradation. Probably generates substrates for RQC. The chain is Endonuclease MutS2 from Pediococcus pentosaceus (strain ATCC 25745 / CCUG 21536 / LMG 10740 / 183-1w).